A 61-amino-acid polypeptide reads, in one-letter code: Large ribosomal subunit protein uL30 (61 aa).

It belongs to the universal ribosomal protein uL30 family. Part of the 50S ribosomal subunit.

In Corynebacterium glutamicum (strain R), this protein is Large ribosomal subunit protein uL30.